We begin with the raw amino-acid sequence, 898 residues long: MKEFYISIETVGNNIVERYIDENGKERTREVEYLPTMFRHCKEESKYKDIYGKNCAPQKFPSMKDARDWMKRMEDIGLEALGMNDFKLAYISDTYGSEIVYDRKFVRVANCDIEVTGDKFPDPMKAEYEIDAITHYDSIDDRFYVFDLLNSMYGSVSKWDAKLAAKLDCEGGDEVPQEILDRVIYMPFDNERDMLMEYINLWEQKRPAIFTGWNIEGFDVPYIMNRVKMILGERSMKRFSPIGRVKSKLIQNMYGSKEIYSIDGVSILDYLDLYKKFAFTNLPSFSLESVAQHETKKGKLPYDGPINKLRETNHQRYISYNIIDVESVQAIDKIRGFIDLVLSMSYYAKMPFSGVMSPIKTWDAIIFNSLKGEHKVIPQQGSHVKQSFPGAFVFEPKPIARRYIMSFDLTSLYPSIIRQVNISPETIRGQFKVHPIHEYIAGTAPKPSDEYSCSPNGWMYDKHQEGIIPKEIAKVFFQRKDWKKKMFAEEMNAEAIKKIIMKGAGSCSTKPEVERYVKFSDDFLNELSNYTESVLNSLIEECEKAATLANTNQLNRKILINSLYGALGNIHFRYYDLRNATAITIFGQVGIQWIARKINEYLNKVCGTNDEDFIAAGDTDSVYVCVDKVIEKVGLDRFKEQNDLVEFMNQFGKKKMEPMIDVAYRELCDYMNNREHLMHMDREAISCPPLGSKGVGGFWKAKKRYALNVYDMEDKRFAEPHLKIMGMETQQSSTPKAVQEALEESIRRILQEGEESVQEYYKNFEKEYRQLDYKVIAEVKTANDIAKYDDKGWPGFKCPFHIRGVLTYRRAVSGLGVAPILDGNKVMVLPLREGNPFGDKCIAWPSGTELPKEIRSDVLSWIDHSTLFQKSFVKPLAGMCESAGMDYEEKASLDFLFG.

Positions 101–337 are 3'-5'exonuclease; the sequence is YDRKFVRVAN…VQAIDKIRGF (237 aa). Residues D112, E114, and D219 each contribute to the Mg(2+) site. A beta hairpin region spans residues 245 to 261; that stretch reads VKSKLIQNMYGSKEIYS. Residues D324, D408, and L409 each contribute to the Mg(2+) site. Positions 377 to 898 are polymerase; the sequence is IPQQGSHVKQ…EKASLDFLFG (522 aa). Residues 411–413, R479, and K557 each bind substrate; that span reads SLY. A Mg(2+)-binding site is contributed by D620. The segment at 702–705 is binding of DNA in B-conformation; that stretch reads KKRY. The interval 893-898 is interaction with the polymerase clamp; it reads LDFLFG.

The protein belongs to the DNA polymerase type-B family. Interacts with the polymerase clamp; this interaction constitutes the polymerase holoenzyme. Interacts with the helicase assembly factor. Part of the replicase complex that includes the DNA polymerase, the polymerase clamp, the clamp loader complex, the single-stranded DNA binding protein, the primase, the helicase and the helicase assembly factor. Mg(2+) is required as a cofactor.

The enzyme catalyses DNA(n) + a 2'-deoxyribonucleoside 5'-triphosphate = DNA(n+1) + diphosphate. In terms of biological role, replicates the viral genomic DNA. This polymerase possesses two enzymatic activities: DNA synthesis (polymerase) and an exonucleolytic activity that degrades single-stranded DNA in the 3'- to 5'-direction for proofreading purpose. The sequence is that of DNA-directed DNA polymerase (43) from Enterobacteria phage T4 (Bacteriophage T4).